Reading from the N-terminus, the 67-residue chain is Large ribosomal subunit protein uL29 (67 aa).

This sequence belongs to the universal ribosomal protein uL29 family.

The chain is Large ribosomal subunit protein uL29 from Desulfitobacterium hafniense (strain Y51).